Consider the following 618-residue polypeptide: Proline--tRNA ligase (618 aa).

The protein belongs to the class-II aminoacyl-tRNA synthetase family. ProS type 1 subfamily. Homodimer.

It localises to the cytoplasm. It catalyses the reaction tRNA(Pro) + L-proline + ATP = L-prolyl-tRNA(Pro) + AMP + diphosphate. Catalyzes the attachment of proline to tRNA(Pro) in a two-step reaction: proline is first activated by ATP to form Pro-AMP and then transferred to the acceptor end of tRNA(Pro). As ProRS can inadvertently accommodate and process non-cognate amino acids such as alanine and cysteine, to avoid such errors it has two additional distinct editing activities against alanine. One activity is designated as 'pretransfer' editing and involves the tRNA(Pro)-independent hydrolysis of activated Ala-AMP. The other activity is designated 'posttransfer' editing and involves deacylation of mischarged Ala-tRNA(Pro). The misacylated Cys-tRNA(Pro) is not edited by ProRS. The polypeptide is Proline--tRNA ligase (Streptococcus pyogenes serotype M28 (strain MGAS6180)).